Consider the following 647-residue polypeptide: Macrolide export ATP-binding/permease protein MacB (647 aa).

Residues 6–244 (LEISGCYRTF…VDTAVTKINN (239 aa)) enclose the ABC transporter domain. Residue 42–49 (GASGSGKS) participates in ATP binding. Helical transmembrane passes span 273 to 293 (FLTM…VALG), 522 to 542 (LLIS…VMNI), 577 to 597 (LVCL…GVVF), and 612 to 632 (SIVA…FLPA).

The protein belongs to the ABC transporter superfamily. Macrolide exporter (TC 3.A.1.122) family. As to quaternary structure, homodimer. Part of the tripartite efflux system MacAB-TolC, which is composed of an inner membrane transporter, MacB, a periplasmic membrane fusion protein, MacA, and an outer membrane component, TolC. The complex forms a large protein conduit and can translocate molecules across both the inner and outer membranes. Interacts with MacA.

Its subcellular location is the cell inner membrane. Part of the tripartite efflux system MacAB-TolC. MacB is a non-canonical ABC transporter that contains transmembrane domains (TMD), which form a pore in the inner membrane, and an ATP-binding domain (NBD), which is responsible for energy generation. Confers resistance against macrolides. The polypeptide is Macrolide export ATP-binding/permease protein MacB (Shewanella sp. (strain W3-18-1)).